A 283-amino-acid polypeptide reads, in one-letter code: Plasma membrane ascorbate-dependent reductase CYBRD1 (283 aa).

The Cytoplasmic segment spans residues methionine 1–lysine 5. A helical transmembrane segment spans residues serine 6–leucine 30. The 206-residue stretch at serine 13 to threonine 218 folds into the Cytochrome b561 domain. At histidine 31–phenylalanine 45 the chain is on the extracellular side. The chain crosses the membrane as a helical span at residues asparagine 46–tyrosine 67. Positions 48, 68, and 77 each coordinate heme b. The Cytoplasmic segment spans residues arginine 68–serine 76. 2 residues coordinate L-ascorbate: lysine 77 and lysine 81. Residues lysine 77–phenylalanine 103 traverse the membrane as a helical segment. Histidine 84 serves as a coordination point for heme b. Over aspartate 104–serine 116 the chain is Extracellular. Residue histidine 106 coordinates Fe(3+). Residues asparagine 113 to serine 116 and histidine 118 contribute to the heme b site. Residues leucine 117 to leucine 142 traverse the membrane as a helical segment. Topologically, residues proline 143–leucine 149 are cytoplasmic. Residue arginine 150 coordinates L-ascorbate. Residues arginine 150–threonine 177 form a helical membrane-spanning segment. Residues histidine 157 and glutamate 178 each contribute to the heme b site. The Extracellular portion of the chain corresponds to glutamate 178–glutamate 195. A helical transmembrane segment spans residues alanine 196–proline 220. At alanine 221–methionine 283 the chain is on the cytoplasmic side. Lysine 223 is a binding site for heme b. A disordered region spans residues asparagine 234–asparagine 263. The span at proline 235–serine 253 shows a compositional bias: polar residues. A compositionally biased stretch (basic and acidic residues) spans asparagine 254–asparagine 263.

As to quaternary structure, homodimer. Heme b is required as a cofactor.

It is found in the cell membrane. Its subcellular location is the apical cell membrane. The enzyme catalyses Fe(3+)(out) + L-ascorbate(in) = monodehydro-L-ascorbate radical(in) + Fe(2+)(out) + H(+). It carries out the reaction Cu(2+)(out) + L-ascorbate(in) = Cu(+)(out) + monodehydro-L-ascorbate radical(in) + H(+). The catalysed reaction is monodehydro-L-ascorbate radical(out) + L-ascorbate(in) = monodehydro-L-ascorbate radical(in) + L-ascorbate(out). Plasma membrane reductase that uses cytoplasmic ascorbate as an electron donor to reduce extracellular Fe(3+) into Fe(2+). It is also able to reduce extracellular monodehydro-L-ascorbate and may be involved in extracellular ascorbate regeneration. May also function as a cupric transmembrane reductase. The sequence is that of Plasma membrane ascorbate-dependent reductase CYBRD1 (cybrd1) from Xenopus tropicalis (Western clawed frog).